A 104-amino-acid chain; its full sequence is L-rhamnose mutarotase (104 aa).

Tyr18 contacts substrate. His22 (proton donor) is an active-site residue. Substrate is bound by residues Tyr41 and Trp76–Trp77.

The protein belongs to the rhamnose mutarotase family. Homodimer.

It is found in the cytoplasm. The catalysed reaction is alpha-L-rhamnose = beta-L-rhamnose. The protein operates within carbohydrate metabolism; L-rhamnose metabolism. Functionally, involved in the anomeric conversion of L-rhamnose. This Listeria monocytogenes serotype 4b (strain F2365) protein is L-rhamnose mutarotase.